The chain runs to 297 residues: Trans-enoyl reductase TOXD (297 aa).

Residues 162–165 (STAT) and Tyr203 each bind NADP(+).

The protein belongs to the zinc-containing alcohol dehydrogenase family. Monomer.

Its function is as follows. Trans-enoyl reductase; part of the diffuse TOX2 gene cluster that mediates the biosynthesis of the HC-toxin, cyclic tetrapeptide of structure cyclo(D-Pro-L-Ala-D-Ala-L-Aeo), where Aeo stands for 2-amino-9,10-epoxi-8-oxodecanoic acid. HC-toxin is a determinant of specificity and virulence in the interaction between the producing fungus and its host, maize. TOXD does not seem to play a role in HC-toxin biosynthesis. This Cochliobolus carbonum (Maize leaf spot fungus) protein is Trans-enoyl reductase TOXD.